Here is a 215-residue protein sequence, read N- to C-terminus: N-(5'-phosphoribosyl)anthranilate isomerase (215 aa).

The protein belongs to the TrpF family.

It catalyses the reaction N-(5-phospho-beta-D-ribosyl)anthranilate = 1-(2-carboxyphenylamino)-1-deoxy-D-ribulose 5-phosphate. Its pathway is amino-acid biosynthesis; L-tryptophan biosynthesis; L-tryptophan from chorismate: step 3/5. The chain is N-(5'-phosphoribosyl)anthranilate isomerase from Chlorobium phaeobacteroides (strain DSM 266 / SMG 266 / 2430).